A 264-amino-acid polypeptide reads, in one-letter code: Thymidylate synthase (264 aa).

Arg-21 contacts dUMP. His-51 lines the (6R)-5,10-methylene-5,6,7,8-tetrahydrofolate pocket. DUMP is bound at residue 126–127 (RR). Catalysis depends on Cys-146, which acts as the Nucleophile. Residues 166-169 (RSCD), Asn-177, and 207-209 (HLY) contribute to the dUMP site. Residue Asp-169 participates in (6R)-5,10-methylene-5,6,7,8-tetrahydrofolate binding. Residue Ala-263 participates in (6R)-5,10-methylene-5,6,7,8-tetrahydrofolate binding.

Belongs to the thymidylate synthase family. Bacterial-type ThyA subfamily. Homodimer.

It is found in the cytoplasm. It carries out the reaction dUMP + (6R)-5,10-methylene-5,6,7,8-tetrahydrofolate = 7,8-dihydrofolate + dTMP. It functions in the pathway pyrimidine metabolism; dTTP biosynthesis. Catalyzes the reductive methylation of 2'-deoxyuridine-5'-monophosphate (dUMP) to 2'-deoxythymidine-5'-monophosphate (dTMP) while utilizing 5,10-methylenetetrahydrofolate (mTHF) as the methyl donor and reductant in the reaction, yielding dihydrofolate (DHF) as a by-product. This enzymatic reaction provides an intracellular de novo source of dTMP, an essential precursor for DNA biosynthesis. In Salmonella paratyphi C (strain RKS4594), this protein is Thymidylate synthase.